Consider the following 512-residue polypeptide: MKRKVKKMAAMATSIIMAIMIILHSIPVLAGRIIYDNETGTHGGYDYELWKDYGNTIMELNDGGTFSCQWSNIGNALFRKGRKFNSDKTYQELGDIVVEYGCDYNPNGNSYLCVYGWTRNPLVEYYIVESWGSWRPPGATPKGTITQWMAGTYEIYETTRVNQPSIDGTATFQQYWSVRTSKRTSGTISVTEHFKQWERMGMRMGKMYEVALTVEGYQSSGYANVYKNEIRIGANPTPAPSQSPIRRDAFSIIEAEEYNSTNSSTLQVIGTPNNGRGIGYIENGNTVTYSNIDFGSGATGFSATVATEVNTSIQIRSDSPTGTLLGTLYVSSTGSWNTYQTVSTNISKITGVHDIVLVFSGPVNVDNFIFSRSSPVPAPGDNTRDAYSIIQAEDYDSSYGPNLQIFSLPGGGSAIGYIENGYSTTYKNIDFGDGATSVTARVATQNATTIQVRLGSPSGTLLGTIYVGSTGSFDTYRDVSATISNTAGVKDIVLVFSGPVNVDWFVFSKSGT.

An N-terminal signal peptide occupies residues 1–30 (MKRKVKKMAAMATSIIMAIMIILHSIPVLA). Residues 33 to 228 (IIYDNETGTH…SSGYANVYKN (196 aa)) form the GH11 domain. Residue Glu-124 is the Nucleophile of the active site. Glu-215 (proton donor) is an active-site residue. CBM6 domains follow at residues 251–371 (SIIE…FIFS) and 388–508 (SIIQ…FVFS). Positions 254 and 256 each coordinate Ca(2+). A D-xylotriose-binding site is contributed by Thr-271. Arg-276 is a Ca(2+) binding site. Copy 1 of the repeat occupies 279–340 (GYIENGNTVT…SSTGSWNTYQ (62 aa)). Residues 279-477 (GYIENGNTVT…GSTGSFDTYR (199 aa)) form a 2 X 61 AA approximate repeats region. Residues Tyr-280, Asn-337, and Asn-364 each coordinate D-xylotriose. Residues Tyr-280, Asn-337, and Asn-364 each contribute to the D-xylobiose site. Ca(2+) is bound by residues Asp-366, Gln-391, Glu-393, and Ser-413. The stretch at 416–477 (GYIENGYSTT…GSTGSFDTYR (62 aa)) is repeat 2. Positions 417, 474, and 501 each coordinate D-xylotriose. A Ca(2+)-binding site is contributed by Asp-503.

The protein belongs to the glycosyl hydrolase 11 (cellulase G) family.

The enzyme catalyses Endohydrolysis of (1-&gt;4)-beta-D-xylosidic linkages in xylans.. The protein operates within glycan degradation; xylan degradation. The sequence is that of Endo-1,4-beta-xylanase A (xynA) from Thermoclostridium stercorarium (Clostridium stercorarium).